A 123-amino-acid polypeptide reads, in one-letter code: DNA-directed RNA polymerase subunit omega (123 aa).

Residues glutamine 72–valine 100 form a disordered region.

This sequence belongs to the RNA polymerase subunit omega family. In terms of assembly, the RNAP catalytic core consists of 2 alpha, 1 beta, 1 beta' and 1 omega subunit. When a sigma factor is associated with the core the holoenzyme is formed, which can initiate transcription.

The enzyme catalyses RNA(n) + a ribonucleoside 5'-triphosphate = RNA(n+1) + diphosphate. Its function is as follows. Promotes RNA polymerase assembly. Latches the N- and C-terminal regions of the beta' subunit thereby facilitating its interaction with the beta and alpha subunits. This is DNA-directed RNA polymerase subunit omega from Maricaulis maris (strain MCS10) (Caulobacter maris).